Here is a 66-residue protein sequence, read N- to C-terminus: UPF0337 protein SpyM3_1723 (66 aa).

Residues 1–10 (MSEEKLKSKI) show a composition bias toward basic and acidic residues. The tract at residues 1 to 23 (MSEEKLKSKIEQASGGLKEGAGK) is disordered.

The protein belongs to the UPF0337 (CsbD) family.

The protein is UPF0337 protein SpyM3_1723 of Streptococcus pyogenes serotype M3 (strain ATCC BAA-595 / MGAS315).